The chain runs to 261 residues: Glucose 1-dehydrogenase A (261 aa).

11 to 35 (VITGGSTGLGRAMAVRFGQEEAKVV) serves as a coordination point for NADP(+). S145 serves as a coordination point for substrate. Y158 acts as the Proton acceptor in catalysis.

This sequence belongs to the short-chain dehydrogenases/reductases (SDR) family. As to quaternary structure, homotetramer.

It catalyses the reaction D-glucose + NAD(+) = D-glucono-1,5-lactone + NADH + H(+). It carries out the reaction D-glucose + NADP(+) = D-glucono-1,5-lactone + NADPH + H(+). The sequence is that of Glucose 1-dehydrogenase A (gdhA) from Priestia megaterium (Bacillus megaterium).